The primary structure comprises 460 residues: Diguanylate cyclase DosC (460 aa).

H98 provides a ligand contact to heme. Positions 325-458 constitute a GGDEF domain; sequence TPLSVLIIDV…GRNRVELWKA (134 aa). Residue D333 coordinates Mg(2+). N341 and D350 together coordinate substrate. D376 contacts Mg(2+). D376 (proton acceptor) is an active-site residue.

Heme serves as cofactor. Requires Mg(2+) as cofactor.

It carries out the reaction 2 GTP = 3',3'-c-di-GMP + 2 diphosphate. It participates in purine metabolism; 3',5'-cyclic di-GMP biosynthesis. Functionally, globin-coupled heme-based oxygen sensor protein displaying diguanylate cyclase (DGC) activity in response to oxygen availability. Thus, catalyzes the synthesis of cyclic diguanylate (c-di-GMP) via the condensation of 2 GTP molecules. Cyclic-di-GMP is a second messenger which controls cell surface-associated traits in bacteria. This Shigella sonnei (strain Ss046) protein is Diguanylate cyclase DosC (dosC).